We begin with the raw amino-acid sequence, 177 residues long: Probable DNA-directed RNA polymerase subunit delta (177 aa).

Residues 14-83 (LSMIEVARAI…GENKWGLRSW (70 aa)) form the HTH HARE-type domain. Acidic residues-rich tracts occupy residues 117 to 134 (GDDD…DEDN) and 142 to 157 (EYDD…EVES). The disordered stretch occupies residues 117–164 (GDDDAIDYGHDDPEDEDNYPGSVSSEYDDENPDDEKDEVESYDQKSTK).

It belongs to the RpoE family. As to quaternary structure, RNAP is composed of a core of 2 alpha, a beta and a beta' subunits. The core is associated with a delta subunit and one of several sigma factors.

Participates in both the initiation and recycling phases of transcription. In the presence of the delta subunit, RNAP displays an increased specificity of transcription, a decreased affinity for nucleic acids, and an increased efficiency of RNA synthesis because of enhanced recycling. In Streptococcus suis (strain 98HAH33), this protein is Probable DNA-directed RNA polymerase subunit delta.